The following is a 206-amino-acid chain: LexA repressor (206 aa).

The segment at residues 28 to 48 (RAEIARRLGFKSANAAEEHLK) is a DNA-binding region (H-T-H motif). Active-site for autocatalytic cleavage activity residues include serine 123 and lysine 160.

This sequence belongs to the peptidase S24 family. As to quaternary structure, homodimer.

It catalyses the reaction Hydrolysis of Ala-|-Gly bond in repressor LexA.. Functionally, represses a number of genes involved in the response to DNA damage (SOS response), including recA and lexA. In the presence of single-stranded DNA, RecA interacts with LexA causing an autocatalytic cleavage which disrupts the DNA-binding part of LexA, leading to derepression of the SOS regulon and eventually DNA repair. The sequence is that of LexA repressor from Shewanella piezotolerans (strain WP3 / JCM 13877).